The chain runs to 156 residues: Small ribosomal subunit protein uS7 (156 aa).

Belongs to the universal ribosomal protein uS7 family. In terms of assembly, part of the 30S ribosomal subunit. Contacts proteins S9 and S11.

One of the primary rRNA binding proteins, it binds directly to 16S rRNA where it nucleates assembly of the head domain of the 30S subunit. Is located at the subunit interface close to the decoding center, probably blocks exit of the E-site tRNA. This Rhodococcus erythropolis (strain PR4 / NBRC 100887) protein is Small ribosomal subunit protein uS7.